The following is a 254-amino-acid chain: Adenosylcobinamide-GDP ribazoletransferase (254 aa).

The next 7 helical transmembrane spans lie at 27-47 (SSLY…VLLA), 50-70 (GMGV…GLIL), 104-124 (VGSF…ICLL), 131-151 (AYGM…LLAA), 170-190 (AGWP…FVLL), 194-214 (LAPS…VGWL), and 233-253 (LVEA…FWAI).

It belongs to the CobS family. Mg(2+) is required as a cofactor.

It is found in the cell inner membrane. The enzyme catalyses alpha-ribazole + adenosylcob(III)inamide-GDP = adenosylcob(III)alamin + GMP + H(+). It catalyses the reaction alpha-ribazole 5'-phosphate + adenosylcob(III)inamide-GDP = adenosylcob(III)alamin 5'-phosphate + GMP + H(+). Its pathway is cofactor biosynthesis; adenosylcobalamin biosynthesis; adenosylcobalamin from cob(II)yrinate a,c-diamide: step 7/7. In terms of biological role, joins adenosylcobinamide-GDP and alpha-ribazole to generate adenosylcobalamin (Ado-cobalamin). Also synthesizes adenosylcobalamin 5'-phosphate from adenosylcobinamide-GDP and alpha-ribazole 5'-phosphate. This Chlorobaculum tepidum (strain ATCC 49652 / DSM 12025 / NBRC 103806 / TLS) (Chlorobium tepidum) protein is Adenosylcobinamide-GDP ribazoletransferase.